Here is a 236-residue protein sequence, read N- to C-terminus: MNIKDIGVIISKKPLKENTFIIRVFTKNHGLYSGVIKASSKKNKFIYQEGNIVDFLWQARLHEHIGIAKCELIKSYTGYFIINKAKLYAFNSVKFLIQELFHEREEHSIFFAFLINYLDNLSKNFCFRDYINFELNLLAETGYKIDLTKCCVSHVTTDLTYVSPKSARALSYKVGKPYRDKLLILPKFLLSEDSKITLEEKKQALTLTNYFFNRYLFHNNRQVEARKEFIEYITNI.

The protein belongs to the RecO family.

Its function is as follows. Involved in DNA repair and RecF pathway recombination. This chain is DNA repair protein RecO, found in Rickettsia typhi (strain ATCC VR-144 / Wilmington).